The primary structure comprises 381 residues: p55-v-Fos-transforming protein (381 aa).

A bZIP domain is found at 137 to 200 (EEKRRIRRER…EKLEFILAAH (64 aa)). A basic motif region spans residues 139–159 (KRRIRRERNKMAAAKCRNRRR). Positions 165 to 193 (LQAETDQLEDKKSALQTEIANLLKEKEKL) are leucine-zipper.

Belongs to the bZIP family. Fos subfamily.

It is found in the host nucleus. This Mus musculus (Mouse) protein is p55-v-Fos-transforming protein (V-FOS).